We begin with the raw amino-acid sequence, 124 residues long: Small ribosomal subunit protein uS12 (124 aa).

The disordered stretch occupies residues 1-22; that stretch reads MATVNQLVRKPRQKPDAKSNVA. Residue Asp-89 is modified to 3-methylthioaspartic acid.

The protein belongs to the universal ribosomal protein uS12 family. As to quaternary structure, part of the 30S ribosomal subunit. Contacts proteins S8 and S17. May interact with IF1 in the 30S initiation complex.

With S4 and S5 plays an important role in translational accuracy. In terms of biological role, interacts with and stabilizes bases of the 16S rRNA that are involved in tRNA selection in the A site and with the mRNA backbone. Located at the interface of the 30S and 50S subunits, it traverses the body of the 30S subunit contacting proteins on the other side and probably holding the rRNA structure together. The combined cluster of proteins S8, S12 and S17 appears to hold together the shoulder and platform of the 30S subunit. This is Small ribosomal subunit protein uS12 from Pseudoalteromonas atlantica (strain T6c / ATCC BAA-1087).